A 491-amino-acid chain; its full sequence is Ketol-acid reductoisomerase (NADP(+)) (491 aa).

The KARI N-terminal Rossmann domain occupies 15-208 (AQLGKCRFMG…GGHRAGVLES (194 aa)). NADP(+) is bound by residues 45-48 (CGAQ), Arg-68, Arg-76, Ser-78, and 108-110 (DKQ). The active site involves His-132. Gly-158 contributes to the NADP(+) binding site. KARI C-terminal knotted domains are found at residues 209 to 344 (SFVA…TAPQ) and 345 to 484 (YEGK…MTDM). Mg(2+)-binding residues include Asp-217, Glu-221, Glu-389, and Glu-393. Ser-414 lines the substrate pocket.

The protein belongs to the ketol-acid reductoisomerase family. Requires Mg(2+) as cofactor.

The catalysed reaction is (2R)-2,3-dihydroxy-3-methylbutanoate + NADP(+) = (2S)-2-acetolactate + NADPH + H(+). It catalyses the reaction (2R,3R)-2,3-dihydroxy-3-methylpentanoate + NADP(+) = (S)-2-ethyl-2-hydroxy-3-oxobutanoate + NADPH + H(+). Its pathway is amino-acid biosynthesis; L-isoleucine biosynthesis; L-isoleucine from 2-oxobutanoate: step 2/4. It participates in amino-acid biosynthesis; L-valine biosynthesis; L-valine from pyruvate: step 2/4. Involved in the biosynthesis of branched-chain amino acids (BCAA). Catalyzes an alkyl-migration followed by a ketol-acid reduction of (S)-2-acetolactate (S2AL) to yield (R)-2,3-dihydroxy-isovalerate. In the isomerase reaction, S2AL is rearranged via a Mg-dependent methyl migration to produce 3-hydroxy-3-methyl-2-ketobutyrate (HMKB). In the reductase reaction, this 2-ketoacid undergoes a metal-dependent reduction by NADPH to yield (R)-2,3-dihydroxy-isovalerate. The chain is Ketol-acid reductoisomerase (NADP(+)) from Escherichia coli O7:K1 (strain IAI39 / ExPEC).